The following is a 277-amino-acid chain: MQNETASHGINFDALGRDRQSLDLASESVELEVPGLNLFYGAKQALFDVRMNIPKQRVTAFIGPSGCGKSTLLRCFNRMNDLVDGCRVEGEIRLDGHNIFAKGVDVAELRRRVGMVFQKPNPFPKSIYENVVYGLRIQGINKKRVLDEAVEWALKGAALWEEVKDRLHESALGLSGGQQQRLVIARTIAVEPEVLLLDEPCSALDPISTLKIEELIYELKSKFTIVIVTHNMQQAARVSDYTAFMYMGKLIEFGDTDTLFTNPAKKQTEDYITGRYG.

The 242-residue stretch at 31–272 (LEVPGLNLFY…PAKKQTEDYI (242 aa)) folds into the ABC transporter domain. 63-70 (GPSGCGKS) contacts ATP.

It belongs to the ABC transporter superfamily. Phosphate importer (TC 3.A.1.7) family. The complex is composed of two ATP-binding proteins (PstB), two transmembrane proteins (PstC and PstA) (Potential). PstS is missing in this species.

It is found in the cell inner membrane. It carries out the reaction phosphate(out) + ATP + H2O = ADP + 2 phosphate(in) + H(+). Its function is as follows. Part of the ABC transporter complex PstSACB involved in phosphate import. Responsible for energy coupling to the transport system. The chain is Phosphate import ATP-binding protein PstB from Pseudomonas aeruginosa (strain ATCC 15692 / DSM 22644 / CIP 104116 / JCM 14847 / LMG 12228 / 1C / PRS 101 / PAO1).